The primary structure comprises 432 residues: Delta-aminolevulinic acid dehydratase, chloroplastic (432 aa).

Residues A84 to N113 form a disordered region. K300 serves as the catalytic Schiff-base intermediate with substrate. 5-aminolevulinate is bound by residues R310 and K322. Residue E338 coordinates Mg(2+). K353 functions as the Schiff-base intermediate with substrate in the catalytic mechanism. 5-aminolevulinate is bound by residues S379 and Y418.

Belongs to the ALAD family. Homooctamer. Requires Mg(2+) as cofactor.

The protein resides in the plastid. It localises to the chloroplast. The catalysed reaction is 2 5-aminolevulinate = porphobilinogen + 2 H2O + H(+). It functions in the pathway porphyrin-containing compound metabolism; protoporphyrin-IX biosynthesis; coproporphyrinogen-III from 5-aminolevulinate: step 1/4. Catalyzes an early step in the biosynthesis of tetrapyrroles. Binds two molecules of 5-aminolevulinate per subunit, each at a distinct site, and catalyzes their condensation to form porphobilinogen. In Physcomitrium patens (Spreading-leaved earth moss), this protein is Delta-aminolevulinic acid dehydratase, chloroplastic (HEMB).